The following is a 482-amino-acid chain: MHSFRLAAAVLPLLLSSCMLGPDHAPPETPLPEKFSEGAKQSAGDVAVSAWWDSFSDRTLNQYVASGLDENLSVQQALERVNAAAADVTIAGAGGLPKASHTTSGEIGKGGDITSTQNISSVQLSLTWLLDVFGQYRRSTESALASLDSAHAAVDAAKLALIKDLVSSYIDARYYQQRVSISRANLKSRQETYDFTNLQVEAGAASRQDVLQAEGLVRSTIAEIPRLELNFRVSAHHIAALLALPSETVIKQLQKSEGQPVYRGKINAGIPADLIRNRFDIRQAERDLAAATAQIGVAEAQLYPAITLSGSITPSYIKQRGRHGGILKWSFGPSLDLPILDGGRLRANVETSKSDAAAAYISWKLTVLTAVQEVEDALTAVRRDVHTENSRRRQVETIEEALKLSTASYTDGASSLLDVLEAQRQVSSAQASLAAAIQQLAKDHVRLNVAIRGGFAAPKVASPREASTVAAANANIQSAHSP.

A signal peptide spans 1–17 (MHSFRLAAAVLPLLLSS). The N-palmitoyl cysteine moiety is linked to residue Cys18. Cys18 carries S-diacylglycerol cysteine lipidation.

This sequence belongs to the outer membrane factor (OMF) (TC 1.B.17) family.

Its subcellular location is the cell membrane. The protein is Nodulation protein T (nodT) of Rhizobium leguminosarum bv. viciae.